The primary structure comprises 345 residues: MSAATDIRPLIGLAATRPLTGTEAEAAFGALFEGAATPAQIGGLLMAMRVRGETVEEMAAATRAMRARMNRIKAPEGAMDIVGTGGDGKGTLNISTATAFVVAGAGVPVAKHGNRNLSSKSGSADALTHLGLNVMSTPEIAEAALAATGICFMMAPVHHPAMRHVGPARAELGTRTIFNLLGPMTNPGLVKRQLTGTFDRVWNRPMAETLRELGSECAWLVHGGDGTDEISIAEPTWVAQLKDGEITEFQISPEDAGLPVHPFEAILGGDPARNAAALRALLDGAQGAYRDAVVLNAAAALLIAGQAADLREGAEIARTSIDSGKARAKLAALAAQVGAPADPNG.

5-phospho-alpha-D-ribose 1-diphosphate-binding positions include Gly83, 86–87 (GD), Thr91, 93–96 (NIST), 111–119 (KHGNRNLSS), and Ser123. An anthranilate-binding site is contributed by Gly83. Residue Ser95 coordinates Mg(2+). Asn114 is an anthranilate binding site. Residue Arg169 participates in anthranilate binding. Mg(2+) contacts are provided by Asp228 and Glu229.

The protein belongs to the anthranilate phosphoribosyltransferase family. As to quaternary structure, homodimer. Requires Mg(2+) as cofactor.

The enzyme catalyses N-(5-phospho-beta-D-ribosyl)anthranilate + diphosphate = 5-phospho-alpha-D-ribose 1-diphosphate + anthranilate. The protein operates within amino-acid biosynthesis; L-tryptophan biosynthesis; L-tryptophan from chorismate: step 2/5. Functionally, catalyzes the transfer of the phosphoribosyl group of 5-phosphorylribose-1-pyrophosphate (PRPP) to anthranilate to yield N-(5'-phosphoribosyl)-anthranilate (PRA). This is Anthranilate phosphoribosyltransferase from Paracoccus denitrificans (strain Pd 1222).